We begin with the raw amino-acid sequence, 261 residues long: DNA repair protein RecO (261 aa).

This sequence belongs to the RecO family.

In terms of biological role, involved in DNA repair and RecF pathway recombination. The sequence is that of DNA repair protein RecO from Chlorobium limicola (strain DSM 245 / NBRC 103803 / 6330).